The chain runs to 167 residues: MRCGPLCRFLWLWPYLSYIEAVPIRKVQDDTKTLIKTIVTRINDISHTQAVSSKQRVAGLDFIPGLHPVLSLSRMDQTLAIYQQILTSLHSRNVVQISNDLENLRDLLHLLASSKSCPLPRARGLESFESLGGVLEASLYSTEVVALSRLQAALQDMLRRLDLSPGC.

The first 21 residues, 1–21, serve as a signal peptide directing secretion; the sequence is MRCGPLCRFLWLWPYLSYIEA. Cysteine 117 and cysteine 167 are joined by a disulfide.

This sequence belongs to the leptin family.

It is found in the secreted. Functionally, key player in the regulation of energy balance and body weight control. Once released into the circulation, has central and peripheral effects by binding LEPR, found in many tissues, which results in the activation of several major signaling pathways. In the hypothalamus, acts as an appetite-regulating factor that induces a decrease in food intake and an increase in energy consumption by inducing anorexinogenic factors and suppressing orexigenic neuropeptides, also regulates bone mass and secretion of hypothalamo-pituitary-adrenal hormones. In the periphery, increases basal metabolism, influences reproductive function, regulates pancreatic beta-cell function and insulin secretion, is pro-angiogenic for endothelial cell and affects innate and adaptive immunity. In the arcuate nucleus of the hypothalamus, activates by depolarization POMC neurons inducing FOS and SOCS3 expression to release anorexigenic peptides and inhibits by hyperpolarization NPY neurons inducing SOCS3 with a consequent reduction on release of orexigenic peptides. In addition to its known satiety inducing effect, has a modulatory role in nutrient absorption. In the intestine, reduces glucose absorption by enterocytes by activating PKC and leading to a sequential activation of p38, PI3K and ERK signaling pathways which exerts an inhibitory effect on glucose absorption. Acts as a growth factor on certain tissues, through the activation of different signaling pathways increases expression of genes involved in cell cycle regulation such as CCND1, via JAK2-STAT3 pathway, or VEGFA, via MAPK1/3 and PI3K-AKT1 pathways. May also play an apoptotic role via JAK2-STAT3 pathway and up-regulation of BIRC5 expression. Pro-angiogenic, has mitogenic activity on vascular endothelial cells and plays a role in matrix remodeling by regulating the expression of matrix metalloproteinases (MMPs) and tissue inhibitors of metalloproteinases (TIMPs). In innate immunity, modulates the activity and function of neutrophils by increasing chemotaxis and the secretion of oxygen radicals. Increases phagocytosis by macrophages and enhances secretion of pro-inflammatory mediators. Increases cytotoxic ability of NK cells. Plays a pro-inflammatory role, in synergy with IL1B, by inducing NOS2 which promotes the production of IL6, IL8 and Prostaglandin E2, through a signaling pathway that involves JAK2, PI3K, MAP2K1/MEK1 and MAPK14/p38. In adaptive immunity, promotes the switch of memory T-cells towards T helper-1 cell immune responses. Increases CD4(+)CD25(-) T-cell proliferation and reduces autophagy during TCR (T-cell receptor) stimulation, through MTOR signaling pathway activation and BCL2 up-regulation. This chain is Leptin (LEP), found in Ursus thibetanus (Asiatic black bear).